Reading from the N-terminus, the 520-residue chain is General transcription factor 3C polypeptide 5 (520 aa).

An N-acetylalanine modification is found at Ala2. Residues 466 to 520 are disordered; sequence LFSNTGKADRGKEQLMFESGEEEEEEEEEEEEEEEDFKPSDGSENEMETEILDYV. 2 stretches are compositionally biased toward acidic residues: residues 484-501 and 508-520; these read SGEE…EEED and SENE…LDYV.

Belongs to the TFIIIC subunit 5 family. As to quaternary structure, part of the TFIIIC subcomplex TFIIIC2, consisting of six subunits, GTF3C1, GTF3C2, GTF3C3, GTF3C4, GTF3C5 and GTF3C6. Interacts with BRF1, GTF3C6 and TBP.

The protein resides in the nucleus. Its function is as follows. Involved in RNA polymerase III-mediated transcription. Integral, tightly associated component of the DNA-binding TFIIIC2 subcomplex that directly binds tRNA and virus-associated RNA promoters. The polypeptide is General transcription factor 3C polypeptide 5 (Gtf3c5) (Mus musculus (Mouse)).